A 246-amino-acid polypeptide reads, in one-letter code: UL16-binding protein 6 (246 aa).

The N-terminal stretch at 1 to 25 (MAAAAIPALLLCLPLLFLLFGWSRA) is a signal peptide. The MHC class I alpha-1 like stretch occupies residues 29-117 (DPHSLCYDIT…IQLENYTPKE (89 aa)). A disulfide bridge connects residues cysteine 50 and cysteine 66. 2 N-linked (GlcNAc...) asparagine glycosylation sites follow: asparagine 68 and asparagine 82. The segment at 118-210 (PLTLQARMSC…MDSTLEPSAG (93 aa)) is MHC class I alpha-2 like. Cysteine 127 and cysteine 190 are oxidised to a cystine. Glycine 218 is lipidated: GPI-anchor amidated glycine. The propeptide at 219–246 (TTQLRATATTLILCCLLIILPCFILPGI) is removed in mature form.

This sequence belongs to the MHC class I family. In terms of assembly, interacts with KLRK1/NKG2D. (Microbial infection) In CMV-infected cells, interacts with the viral glycoprotein UL16; this interaction causes relocalization from the cell surface to the cytoplasm and prevents binding to and activation of KLRK1/NKG2D, providing CMV with an immune evasion mechanism. In terms of tissue distribution, widely expressed. Expressed in trachea. Constitutively expressed in peripheral blood mononuclear cells, including B-cells and natural killer cells, as well as CD4+ and CD8+ T-cells and monocytes. Tends to be up-regulated in various lymphoid malignancies, including chronic lymphocytic leukemia.

The protein resides in the cell membrane. It localises to the endoplasmic reticulum. In terms of biological role, binds and activates the KLRK1/NKG2D receptor, mediating natural killer cell cytotoxicity. This Homo sapiens (Human) protein is UL16-binding protein 6 (RAET1L).